We begin with the raw amino-acid sequence, 756 residues long: MGVPAGMPHPNGLQPQRKDKALAQNPNTPQKGSEAFLKKLIHSSWFFPGAAIVVMLGFLMASFFTQPSRQVDTNVGLQLLNDHQVKSAKIYDGDQRVELQLKDDYKKGNDNYGKSVRFYYVQPRGDEVAKAMESAELESYTDQPVEHSFLGSLVSLLLPILLFGVLFWFLMGRVGGGSSVMSFSKSRAKKFTKDKPEVRFSDVAGVDEALAELEEVREFLAEPEKFTRLGAKIPKGVLLYGPPGTGKTLLAKAVAGEAGVPFYSISGSDFVEMFVGVGASRVRDLFKEAKSDPAAIVFVDEIDAVGRRRGVGMGGGNDEREQTLNQLLVEMDGFDGNSNVIVIAATNRPDVLDPALLRPGRFDRQIGVDAPDMQGREHILRVHAAGKPIANTVDLAQVAKRTPGFTGADLANVMNEAALLTARDNGNVIDDRAIDEAIDRVMAGPQRSSRIMNEHERKVTAYHEGGHALVAAALRNSAPVTKITILPRGRALGYTMVMPQDDKYSTTRHELLDQMAYAMGGRAAEEIVFHDPSTGASNDIQKATDTARKMVTDYGMSAVIGSVKLGGEDTEPFLGGGGASARNYSDATAAKVDAEIRALLEQAHDEAFQILLENRDILDRLAFALLEKETLLENEIAEIFKDVRKRPEREHWYSKPTRERTDIPPVKAPSELAKEAEKSEEAPAEAPTVPVAPAAPAQQVPVAPTQPLPPQAPLTDPDADPTVAMPTQQYPNYPAPPEHRPENGTPNQNGAENERG.

The Cytoplasmic portion of the chain corresponds to 1 to 44 (MGVPAGMPHPNGLQPQRKDKALAQNPNTPQKGSEAFLKKLIHSS). A helical membrane pass occupies residues 45 to 65 (WFFPGAAIVVMLGFLMASFFT). The Extracellular segment spans residues 66–148 (QPSRQVDTNV…SYTDQPVEHS (83 aa)). Residues 149–169 (FLGSLVSLLLPILLFGVLFWF) traverse the membrane as a helical segment. Topologically, residues 170–756 (LMGRVGGGSS…NQNGAENERG (587 aa)) are cytoplasmic. An ATP-binding site is contributed by 241-248 (GPPGTGKT). Residue His463 coordinates Zn(2+). Glu464 is a catalytic residue. 2 residues coordinate Zn(2+): His467 and Asp539. 2 stretches are compositionally biased toward basic and acidic residues: residues 647–662 (PERE…ERTD) and 672–681 (LAKEAEKSEE). The tract at residues 647-756 (PEREHWYSKP…NQNGAENERG (110 aa)) is disordered. Composition is skewed to low complexity over residues 684-703 (AEAP…VPVA) and 713-724 (PLTDPDADPTVA). Residues 744 to 756 (GTPNQNGAENERG) show a composition bias toward polar residues.

This sequence in the central section; belongs to the AAA ATPase family. It in the C-terminal section; belongs to the peptidase M41 family. Homohexamer. Requires Zn(2+) as cofactor.

Its subcellular location is the cell membrane. Its function is as follows. Acts as a processive, ATP-dependent zinc metallopeptidase for both cytoplasmic and membrane proteins. Plays a role in the quality control of integral membrane proteins. This chain is ATP-dependent zinc metalloprotease FtsH, found in Rothia mucilaginosa (strain DY-18) (Stomatococcus mucilaginosus).